A 266-amino-acid chain; its full sequence is Apolipoprotein A-I (266 aa).

The first 18 residues, 1 to 18 (MKAVVLTLAVLFLTGSQA), serve as a signal peptide directing secretion. 2 tandem repeats follow at residues 67 to 88 (LKLLDNWDTLSSTVAKLREQIG) and 89 to 110 (PVTQEFWDNLEKETEVLRQEMN). The tract at residues 67-266 (LKLLDNWDTL…DEATKKLNAQ (200 aa)) is 10 X approximate tandem repeats. The residue at position 109 (methionine 109) is a Methionine sulfoxide. A 3; half-length repeat occupies 111–121 (KDLEEVKKKVQ). 5 tandem repeats follow at residues 122-143 (PYLDEFQSKWHEEVELYRQKVA), 144-165 (PLGAELSEGARQKLQELQEKLS), 166-187 (PLGEELRDRARTHVDALRAQLA), 188-209 (PYSDQLRERLATRLQALKEGGG), and 210-231 (AALAEYHAKASEQLSVLREKAK). The 9; half-length repeat unit spans residues 232–242 (PALEDLRQGLL). Residues 243 to 266 (PVLESFRTSLLAAVDEATKKLNAQ) form repeat 10.

The protein belongs to the apolipoprotein A1/A4/E family. Homodimer. Interacts with APOA1BP and CLU. Component of a sperm activating protein complex (SPAP), consisting of APOA1, an immunoglobulin heavy chain, an immunoglobulin light chain and albumin. Interacts with NDRG1. Interacts with SCGB3A2. Interacts with NAXE and YJEFN3. Glycosylated. In terms of processing, palmitoylated. Post-translationally, phosphorylation sites are present in the extracellular medium.

Its subcellular location is the secreted. In terms of biological role, participates in the reverse transport of cholesterol from tissues to the liver for excretion by promoting cholesterol efflux from tissues and by acting as a cofactor for the lecithin cholesterol acyltransferase (LCAT). As part of the SPAP complex, activates spermatozoa motility. In Odobenus rosmarus divergens (Pacific walrus), this protein is Apolipoprotein A-I (APOA1).